The primary structure comprises 104 residues: A-type ATP synthase subunit F (104 aa).

Belongs to the V-ATPase F subunit family. In terms of assembly, has multiple subunits with at least A(3), B(3), C, D, E, F, H, I and proteolipid K(x).

The protein localises to the cell membrane. Component of the A-type ATP synthase that produces ATP from ADP in the presence of a proton gradient across the membrane. This chain is A-type ATP synthase subunit F, found in Thermoplasma acidophilum (strain ATCC 25905 / DSM 1728 / JCM 9062 / NBRC 15155 / AMRC-C165).